A 341-amino-acid polypeptide reads, in one-letter code: uncharacterized protein (341 aa).

58 to 82 lines the NADP(+) pocket; sequence ITGGSSGIGAAAAKKIAEAGGTVVL. Ser194 contributes to the substrate binding site. Tyr207 serves as the catalytic Proton acceptor. Positions 309–329 are disordered; it reads DSSAAKGSESQTDTSELDKRS.

The protein belongs to the short-chain dehydrogenases/reductases (SDR) family.

This is an uncharacterized protein from Mycobacterium bovis (strain ATCC BAA-935 / AF2122/97).